We begin with the raw amino-acid sequence, 1219 residues long: Pleckstrin homology domain-containing family G member 3 (1219 aa).

The span at 1–10 shows a compositional bias: polar residues; that stretch reads MPVSTSLHQD. The disordered stretch occupies residues 1–66; that stretch reads MPVSTSLHQD…HLPNSNNNSS (66 aa). A compositionally biased stretch (low complexity) spans 18–46; sequence SLTSTTSSSGSSCDSRSAMEEPSSSEAPA. Phosphoserine is present on serine 76. Positions 93-272 constitute a DH domain; it reads YLGRVVREIV…TCVAWYINDM (180 aa). A PH domain is found at 296-394; that stretch reads DLTTYGELVL…WTHHIKRLIL (99 aa). Polar residues predominate over residues 431–442; the sequence is WSSQDEVSTNVR. 2 disordered regions span residues 431–599 and 613–708; these read WSSQ…PSVL and FSRR…KESA. Position 433 is a phosphoserine (serine 433). Residues 446–463 show a composition bias toward basic and acidic residues; it reads RQSEPTKHLLRQLNEKAR. Serine 576, serine 577, serine 618, serine 631, serine 640, serine 643, and serine 647 each carry phosphoserine. Low complexity predominate over residues 630 to 645; sequence GSPRLVSRSSSVLSLE. Residues 696–708 show a composition bias toward basic and acidic residues; the sequence is EPDRSSCKKKESA. A phosphoserine mark is found at serine 741, serine 779, and serine 827. Disordered regions lie at residues 756-780, 821-840, 859-878, 955-1133, and 1146-1207; these read RFNS…VGSR, MESS…ANGF, EESA…RSPA, APER…LYVT, and VMEK…RVRN. Residues 826 to 836 are compositionally biased toward gly residues; sequence GSPGKGPGQGQ. Low complexity predominate over residues 859–873; that stretch reads EESATASPESSSPTE. Serine 962, serine 1011, serine 1023, serine 1037, and serine 1040 each carry phosphoserine. The span at 1020-1029 shows a compositional bias: polar residues; that stretch reads SAVSQRTTSP. Over residues 1049–1065 the composition is skewed to basic and acidic residues; the sequence is DVRELCSKYASRDEARR. Serine 1081 bears the Phosphoserine mark. Arginine 1107 carries the omega-N-methylarginine modification. Basic and acidic residues predominate over residues 1187–1197; sequence QPKEEGSRDPA.

The protein localises to the cytoplasm. It localises to the cytoskeleton. In terms of biological role, plays a role in controlling cell polarity and cell motility by selectively binding newly polymerized actin and activating RAC1 and CDC42 to enhance local actin polymerization. This is Pleckstrin homology domain-containing family G member 3 from Homo sapiens (Human).